A 264-amino-acid polypeptide reads, in one-letter code: Thymidylate synthase (264 aa).

Residue Arg-21 coordinates dUMP. His-51 is a binding site for (6R)-5,10-methylene-5,6,7,8-tetrahydrofolate. 126–127 (RR) is a binding site for dUMP. The active-site Nucleophile is Cys-146. DUMP is bound by residues 166–169 (RSCD), Asn-177, and 207–209 (HLY). Asp-169 contacts (6R)-5,10-methylene-5,6,7,8-tetrahydrofolate. (6R)-5,10-methylene-5,6,7,8-tetrahydrofolate is bound at residue Ala-263.

This sequence belongs to the thymidylate synthase family. Bacterial-type ThyA subfamily. As to quaternary structure, homodimer.

It is found in the cytoplasm. The enzyme catalyses dUMP + (6R)-5,10-methylene-5,6,7,8-tetrahydrofolate = 7,8-dihydrofolate + dTMP. It participates in pyrimidine metabolism; dTTP biosynthesis. In terms of biological role, catalyzes the reductive methylation of 2'-deoxyuridine-5'-monophosphate (dUMP) to 2'-deoxythymidine-5'-monophosphate (dTMP) while utilizing 5,10-methylenetetrahydrofolate (mTHF) as the methyl donor and reductant in the reaction, yielding dihydrofolate (DHF) as a by-product. This enzymatic reaction provides an intracellular de novo source of dTMP, an essential precursor for DNA biosynthesis. The polypeptide is Thymidylate synthase (Shigella flexneri serotype 5b (strain 8401)).